A 238-amino-acid chain; its full sequence is Mannose-binding protein A (238 aa).

Positions 1-17 are cleaved as a signal peptide; the sequence is MLLLPLLVLLCVVSVSS. The segment covering 38-49 has biased composition (basic and acidic residues); that stretch reads DGRDGPKGEKGE. A disordered region spans residues 38–87; the sequence is DGRDGPKGEKGEPGQGLRGLQGPPGKLGPPGSVGAPGSQGPKGQKGDRGD. One can recognise a Collagen-like domain in the interval 39-88; it reads GRDGPKGEKGEPGQGLRGLQGPPGKLGPPGSVGAPGSQGPKGQKGDRGDS. Position 43 is a 4-hydroxyproline (Pro-43). 5-hydroxylysine occurs at positions 44 and 47. 2 O-linked (Gal...) hydroxylysine glycosylation sites follow: Lys-44 and Lys-47. Residues Pro-50, Pro-61, Pro-67, Pro-73, and Pro-78 each carry the 4-hydroxyproline modification. 2 positions are modified to 5-hydroxylysine: Lys-79 and Lys-82. Residues Lys-79 and Lys-82 are each glycosylated (O-linked (Gal...) hydroxylysine). The 96-residue stretch at 143-238 folds into the C-type lectin domain; that stretch reads ALCSELRGTV…SHTAVCEFPA (96 aa). Disulfide bonds link Cys-145–Cys-234 and Cys-212–Cys-226. Ca(2+) contacts are provided by Asp-178, Glu-182, Glu-202, Asn-204, Asp-205, Glu-210, Asp-211, Asn-222, and Asp-223. Residues 202 to 210 form a calcium-dependent carbohydrate binding region; the sequence is EPNDHGSGE.

In terms of assembly, homotrimer. Forms higher oligomeric complexes formed by the association of two, three or more homotrimers. Oligomerization occurs in the endoplasmic reticulum. Interacts with MASP1 and MASP2. Hydroxylated on lysine and proline residues within the collagen-like domain. Post-translationally, O-glycosylated. O-linked glycans on hydroxylysine residues consist of Glc-Gal disaccharides bound to the oxygen atom of post-translationally added hydroxyl groups. Detected in blood serum (at protein level).

It localises to the secreted. In terms of biological role, calcium-dependent lectin. Plays a role in the innate immune response by binding mannose, fucose and N-acetylglucosamine moieties on different microorganisms and mediating activation of the lectin complement pathway. Binds to late apoptotic cells, as well as to apoptotic blebs and to necrotic cells, but not to early apoptotic cells, facilitating their uptake by macrophages. This Rattus norvegicus (Rat) protein is Mannose-binding protein A (Mbl1).